The sequence spans 124 residues: Small ribosomal subunit protein bS6 (124 aa).

Positions 96–124 (ETGPSPMMKEVQREEAKKSAATQPSEAQA) are disordered. The span at 115–124 (AATQPSEAQA) shows a compositional bias: polar residues.

It belongs to the bacterial ribosomal protein bS6 family.

Binds together with bS18 to 16S ribosomal RNA. The polypeptide is Small ribosomal subunit protein bS6 (Paraburkholderia phytofirmans (strain DSM 17436 / LMG 22146 / PsJN) (Burkholderia phytofirmans)).